The sequence spans 681 residues: MSKSKSLAFVIAALSYSFFSLFSSPPKSHYHELFISTSFSDNASVALNLHTLTRRPHVAGTVANAEAAEYVRSVFTSSALKSHVVAYQVSLTYPVHRSLVLTPTDSAKPITFLLEQEKLGDNPYANEVMPTFHGYAKSGNVSGPVVYANYGRVEDFVRLKKDMGVNVSGAVVIARYGQIYRGDIVKNAYEAGAVGVVIYTDKRDYGGDEWFPASKWMPPSGVQVGTVYNGLGDPTTPGWASVDGCERLSDEAVELSGDVPLIPSLPVSAADAEVILKTVVGDVSDGDVYPVGPGPGVLNLSYIGETVIAKIENVIGVIEGEEEPDRYVILGNHRDAWTFGAVDPNSGTAVLMEIAQRLDKLQKRGWKPRRTIILCNWDAEEYGLIGSTEWVEENREMLSSRAVAYLNVDCAVSGPGFHASATPQLDELIKVAAQEVRDPDNATQTIYESWIGSSDSVVIRRLGGGGSDYASFVQHVGVPGVDMSFGRGYPVYHSMYDDFTWMEKFGDPMFQRHVAMASVLGLVALRLADEEIIPFNYTSYALELKKSAEDLENEKLGHNIDVSTLIKSIEDLSTAAKHISLEKEAIKGALKVRELNDRLMMAERALTDRDGLSERPWYKHLIYGPSKYDDYGSKSFPGVDDAIDNAKKLNTKASWENVQHQIWRVSRAIRHASLVLKGELI.

Topologically, residues 1-6 (MSKSKS) are cytoplasmic. The chain crosses the membrane as a helical; Signal-anchor for type II membrane protein span at residues 7 to 24 (LAFVIAALSYSFFSLFSS). Topologically, residues 25 to 681 (PPKSHYHELF…ASLVLKGELI (657 aa)) are extracellular. 4 N-linked (GlcNAc...) asparagine glycosylation sites follow: Asn42, Asn140, Asn166, and Asn299. Positions 241–527 (SVDGCERLSD…SVLGLVALRL (287 aa)) are catalytic. Positions 333 and 343 each coordinate Zn(2+). The active-site Nucleophile is the Glu380. Glu381 and Asp409 together coordinate Zn(2+). A glycan (N-linked (GlcNAc...) asparagine) is linked at Asn441. His493 is a binding site for Zn(2+). Asn536 carries N-linked (GlcNAc...) asparagine glycosylation.

It belongs to the peptidase M28 family. M28B subfamily. Requires Zn(2+) as cofactor.

Its subcellular location is the endoplasmic reticulum membrane. The enzyme catalyses Release of an unsubstituted, C-terminal glutamyl residue, typically from Ac-Asp-Glu or folylpoly-gamma-glutamates.. Acts in association with AMP1 to suppress ectopic stem cell niche formation in the shoot apical meristem (SAM) independently of cytokinin signaling pathway. The sequence is that of Probable glutamate carboxypeptidase LAMP1 from Arabidopsis thaliana (Mouse-ear cress).